The chain runs to 717 residues: Ribosomal RNA large subunit methyltransferase K/L (717 aa).

The region spanning 43 to 154 (IGYKACLWSR…KGKANITLDL (112 aa)) is the THUMP domain.

The protein belongs to the methyltransferase superfamily. RlmKL family.

It is found in the cytoplasm. The catalysed reaction is guanosine(2445) in 23S rRNA + S-adenosyl-L-methionine = N(2)-methylguanosine(2445) in 23S rRNA + S-adenosyl-L-homocysteine + H(+). It catalyses the reaction guanosine(2069) in 23S rRNA + S-adenosyl-L-methionine = N(2)-methylguanosine(2069) in 23S rRNA + S-adenosyl-L-homocysteine + H(+). Specifically methylates the guanine in position 2445 (m2G2445) and the guanine in position 2069 (m7G2069) of 23S rRNA. This chain is Ribosomal RNA large subunit methyltransferase K/L, found in Aeromonas hydrophila subsp. hydrophila (strain ATCC 7966 / DSM 30187 / BCRC 13018 / CCUG 14551 / JCM 1027 / KCTC 2358 / NCIMB 9240 / NCTC 8049).